A 522-amino-acid chain; its full sequence is AAA ATPase forming ring-shaped complexes (522 aa).

The tract at residues 1–26 (MGQEKHTDAASQSRDPEAVAAHENDQ) is disordered. The stretch at 20–57 (AAHENDQLRQRNHALAKALTRATEELRKAKAQLEQFMA) forms a coiled coil. 248-253 (GNGKTL) lines the ATP pocket.

This sequence belongs to the AAA ATPase family. In terms of assembly, homohexamer. Assembles into a hexameric ring structure.

This Bifidobacterium animalis subsp. lactis (strain AD011) protein is AAA ATPase forming ring-shaped complexes.